A 24-amino-acid chain; its full sequence is Protein YahV (24 aa).

The chain crosses the membrane as a helical span at residues 4 to 24 (ILLNVLNIVFIGIAIILVIIC).

The protein resides in the cell inner membrane. The protein is Protein YahV of Escherichia coli (strain K12).